The following is a 176-amino-acid chain: B9 domain-containing protein 2 (176 aa).

The C2 B9-type domain maps to 2–118 (AEVHIIGQII…LSPTWRPLGT (117 aa)).

This sequence belongs to the B9D family. Part of the tectonic-like complex (also named B9 complex).

The protein localises to the cytoplasm. It localises to the cytoskeleton. The protein resides in the cilium basal body. Its subcellular location is the cilium axoneme. Its function is as follows. Component of the tectonic-like complex, a complex localized at the transition zone of primary cilia and acting as a barrier that prevents diffusion of transmembrane proteins between the cilia and plasma membranes. This chain is B9 domain-containing protein 2 (b9d2), found in Xenopus laevis (African clawed frog).